A 244-amino-acid chain; its full sequence is Ribosomal RNA large subunit methyltransferase E (244 aa).

The tract at residues 1 to 23 is disordered; that stretch reads MATGGKKSAGRTTGSGPAGGSRN. 5 residues coordinate S-adenosyl-L-methionine: G91, W93, D116, D132, and D156. K196 (proton acceptor) is an active-site residue.

Belongs to the class I-like SAM-binding methyltransferase superfamily. RNA methyltransferase RlmE family.

It localises to the cytoplasm. It carries out the reaction uridine(2552) in 23S rRNA + S-adenosyl-L-methionine = 2'-O-methyluridine(2552) in 23S rRNA + S-adenosyl-L-homocysteine + H(+). Its function is as follows. Specifically methylates the uridine in position 2552 of 23S rRNA at the 2'-O position of the ribose in the fully assembled 50S ribosomal subunit. The protein is Ribosomal RNA large subunit methyltransferase E of Paramagnetospirillum magneticum (strain ATCC 700264 / AMB-1) (Magnetospirillum magneticum).